We begin with the raw amino-acid sequence, 385 residues long: Trans-enoyl reductase tasC (385 aa).

49–52 contacts NADP(+); it reads VDTK. 136 to 143 contributes to the substrate binding site; it reads NSWYTVAW. Residues 196 to 199, 219 to 222, and 284 to 285 contribute to the NADP(+) site; these read SSST, SARN, and LD. Substrate is bound at residue 305-309; that stretch reads GPELM. 374 to 375 contributes to the NADP(+) binding site; it reads VS.

Belongs to the zinc-containing alcohol dehydrogenase family. Monomer.

The catalysed reaction is (2S,4S)-4-hydroxy-4-methylglutamate + 8 malonyl-CoA + 3 S-adenosyl-L-methionine + ATP + 8 NADPH + 11 H(+) = (2S)-3-[(2S)-3,5-dioxo-4-[(2E,4R,6R,8E,10E,12E)-4,6,12-trimethyltetradeca-2,8,10,12-tetraenoyl]pyrrolidin-2-yl]-2-hydroxy-2-methylpropanoate + AMP + 3 S-adenosyl-L-homocysteine + 8 CO2 + diphosphate + 8 NADP(+) + 8 CoA + 6 H2O. It catalyses the reaction (2S,4R)-4-hydroxy-4-methylglutamate + 8 malonyl-CoA + 3 S-adenosyl-L-methionine + ATP + 8 NADPH + 11 H(+) = (2R)-3-[(2S)-3,5-dioxo-4-[(2E,4R,6R,8E,10E,12E)-4,6,12-trimethyltetradeca-2,8,10,12-tetraenoyl]pyrrolidin-2-yl]-2-hydroxy-2-methylpropanoate + AMP + 3 S-adenosyl-L-homocysteine + 8 CO2 + diphosphate + 8 NADP(+) + 8 CoA + 6 H2O. The protein operates within secondary metabolite biosynthesis. Functionally, trans-enoyl reductase; part of the gene cluster that mediates the biosynthesis of the tetramic acids Sch210971 and Sch210972, potential anti-HIV fungal natural product that contain a decalin core. The PKS module of tasS together with the enoylreductase tasC catalyze the formation of the polyketide unit which is then conjugated to 4-hydroxyl-4-methyl glutamate (HMG) by the condensation domain of the tasS NRPS module. One unique structural feature of Sch210971 and Sch210972 is the tetramic acid motif proposed to be derived from the non-proteinogenic amino acid HMG, by a Dieckmann-type condensation catalyzed by the reductase domain of tasS. The aldolase tasA catalyzes the aldol condensation of 2 molecules of pyruvic acid to yield the intermediate 4-hydroxyl-4-methyl-2-oxoglutarate (HMOG), which can then be stereoselectively transaminated, may be by tasG, to form HMG. The Diels-Alderase tas3 then uses the Dieckmann product of tasS as substrate and catalyzes the Diels-Alder cycloaddition to form the decalin ring of Sch210971 and Sch210972. This is Trans-enoyl reductase tasC from Hapsidospora irregularis.